Consider the following 118-residue polypeptide: Fluoride-specific ion channel FluC 1 (118 aa).

Helical transmembrane passes span 5–25 and 47–67; these read FLLV…ISVL and FLLG…FLGT. Na(+)-binding residues include G71 and T74. A helical membrane pass occupies residues 98-118; it reads YLGFTYVFGLIAAFLGMMLGV.

This sequence belongs to the fluoride channel Fluc/FEX (TC 1.A.43) family.

It localises to the cell membrane. The catalysed reaction is fluoride(in) = fluoride(out). Its activity is regulated as follows. Na(+) is not transported, but it plays an essential structural role and its presence is essential for fluoride channel function. Its function is as follows. Fluoride-specific ion channel. Important for reducing fluoride concentration in the cell, thus reducing its toxicity. This is Fluoride-specific ion channel FluC 1 from Listeria monocytogenes serovar 1/2a (strain ATCC BAA-679 / EGD-e).